The primary structure comprises 608 residues: Phosphatidylinositol/phosphatidylcholine transfer protein SFH4 (608 aa).

The disordered stretch occupies residues 1 to 33; it reads MSGPLDRFTSPCFSNNGEKREKKSDFEVSEDEK. A compositionally biased stretch (basic and acidic residues) spans 17-33; that stretch reads GEKREKKSDFEVSEDEK. The 175-residue stretch at 146-320 folds into the CRAL-TRIO domain; it reads ELDEVLRYYP…FFGGTCTCAD (175 aa). A disordered region spans residues 358 to 403; it reads DSQISSSDKPTYSLKVSDTSTAKSGSELEEMASPKTNTNNHVPKLT. The segment covering 371–381 has biased composition (polar residues); sequence LKVSDTSTAKS. Residues 526-572 are a coiled coil; that stretch reads ISSVLSRLGDLEKQIENLHSRKSEMPHEKEELLNAAVYRVDALEAEL.

This sequence belongs to the SFH family.

Its subcellular location is the golgi apparatus membrane. It is found in the cell membrane. Required for transport of secretory proteins from the Golgi complex. Catalyzes the transfer of phosphatidylinositol and phosphatidylcholine between membranes in vitro. This chain is Phosphatidylinositol/phosphatidylcholine transfer protein SFH4 (SFH4), found in Arabidopsis thaliana (Mouse-ear cress).